We begin with the raw amino-acid sequence, 115 residues long: NADH-ubiquinone oxidoreductase chain 3 (115 aa).

The next 3 membrane-spanning stretches (helical) occupy residues 4 to 24, 55 to 75, and 87 to 107; these read LVAL…AFWL, FFLV…LLPL, and MMLT…YEWM.

This sequence belongs to the complex I subunit 3 family. As to quaternary structure, core subunit of respiratory chain NADH dehydrogenase (Complex I) which is composed of 45 different subunits. Interacts with TMEM186. Interacts with TMEM242.

It localises to the mitochondrion inner membrane. The catalysed reaction is a ubiquinone + NADH + 5 H(+)(in) = a ubiquinol + NAD(+) + 4 H(+)(out). Its function is as follows. Core subunit of the mitochondrial membrane respiratory chain NADH dehydrogenase (Complex I) which catalyzes electron transfer from NADH through the respiratory chain, using ubiquinone as an electron acceptor. Essential for the catalytic activity of complex I. The chain is NADH-ubiquinone oxidoreductase chain 3 from Habromys lophurus (Crested-tailed deer mouse).